The sequence spans 375 residues: Alanine racemase, catabolic (375 aa).

The Proton acceptor; specific for D-alanine role is filled by lysine 38. At lysine 38 the chain carries N6-(pyridoxal phosphate)lysine. Residue tyrosine 269 is the Proton acceptor; specific for L-alanine of the active site.

Belongs to the alanine racemase family. The cofactor is pyridoxal 5'-phosphate.

It catalyses the reaction L-alanine = D-alanine. Its pathway is amino-acid biosynthesis; D-alanine biosynthesis; D-alanine from L-alanine: step 1/1. This Schizosaccharomyces pombe (strain 972 / ATCC 24843) (Fission yeast) protein is Alanine racemase, catabolic (alr1).